Consider the following 78-residue polypeptide: Putative permease-like protein YdzE (78 aa).

3 helical membrane-spanning segments follow: residues 2–22 (YLGI…LQLL), 27–47 (GGLF…ILLG), and 49–69 (QIGG…LLVI). The EamA domain maps to 2–70 (YLGIVSTACA…ILSGVLLVIK (69 aa)).

It belongs to the EamA transporter family.

Its subcellular location is the cell membrane. In Bacillus subtilis (strain 168), this protein is Putative permease-like protein YdzE (ydzE).